The following is a 348-amino-acid chain: Erythronate-4-phosphate dehydrogenase (348 aa).

Substrate is bound by residues threonine 46 and threonine 67. Aspartate 147 contacts NAD(+). The active site involves arginine 209. Position 233 (aspartate 233) interacts with NAD(+). The active site involves glutamate 238. The Proton donor role is filled by histidine 255. Glycine 258 is a binding site for NAD(+). Tyrosine 259 serves as a coordination point for substrate.

The protein belongs to the D-isomer specific 2-hydroxyacid dehydrogenase family. PdxB subfamily. Homodimer.

The protein localises to the cytoplasm. It catalyses the reaction 4-phospho-D-erythronate + NAD(+) = (R)-3-hydroxy-2-oxo-4-phosphooxybutanoate + NADH + H(+). It functions in the pathway cofactor biosynthesis; pyridoxine 5'-phosphate biosynthesis; pyridoxine 5'-phosphate from D-erythrose 4-phosphate: step 2/5. Functionally, catalyzes the oxidation of erythronate-4-phosphate to 3-hydroxy-2-oxo-4-phosphonooxybutanoate. The protein is Erythronate-4-phosphate dehydrogenase of Bacteroides fragilis (strain YCH46).